Consider the following 164-residue polypeptide: Phosphopantetheine adenylyltransferase (164 aa).

Serine 11 is a substrate binding site. ATP-binding positions include 11–12 (SF) and histidine 19. Substrate-binding residues include lysine 43, alanine 76, and arginine 90. Residues 91–93 (GLR), glutamate 101, and 126–132 (YQHISSS) contribute to the ATP site.

The protein belongs to the bacterial CoaD family. In terms of assembly, homohexamer. It depends on Mg(2+) as a cofactor.

It localises to the cytoplasm. The catalysed reaction is (R)-4'-phosphopantetheine + ATP + H(+) = 3'-dephospho-CoA + diphosphate. It participates in cofactor biosynthesis; coenzyme A biosynthesis; CoA from (R)-pantothenate: step 4/5. Reversibly transfers an adenylyl group from ATP to 4'-phosphopantetheine, yielding dephospho-CoA (dPCoA) and pyrophosphate. This chain is Phosphopantetheine adenylyltransferase, found in Streptococcus sanguinis (strain SK36).